Consider the following 397-residue polypeptide: Enoyl-[acyl-carrier-protein] reductase [NADH] (397 aa).

NAD(+) contacts are provided by residues glycine 48 to tyrosine 53, leucine 74 to glutamate 75, aspartate 111 to alanine 112, and leucine 139 to alanine 140. Tyrosine 225 is a binding site for substrate. Residue tyrosine 235 is the Proton donor of the active site. Residues lysine 244 and valine 273 to threonine 275 each bind NAD(+).

Belongs to the TER reductase family. Monomer.

It carries out the reaction a 2,3-saturated acyl-[ACP] + NAD(+) = a (2E)-enoyl-[ACP] + NADH + H(+). The protein operates within lipid metabolism; fatty acid biosynthesis. In terms of biological role, involved in the final reduction of the elongation cycle of fatty acid synthesis (FAS II). Catalyzes the reduction of a carbon-carbon double bond in an enoyl moiety that is covalently linked to an acyl carrier protein (ACP). The sequence is that of Enoyl-[acyl-carrier-protein] reductase [NADH] from Tolumonas auensis (strain DSM 9187 / NBRC 110442 / TA 4).